A 350-amino-acid polypeptide reads, in one-letter code: Guanine nucleotide-binding protein G(t) subunit alpha-1 (350 aa).

The tract at residues 1 to 21 (MGAGASAEEKHSRELEKKLKE) is disordered. The N-myristoyl glycine moiety is linked to residue G2. Positions 7–21 (AEEKHSRELEKKLKE) are enriched in basic and acidic residues. A G-alpha domain is found at 28 to 350 (RTVKLLLLGA…KENLKDCGLF (323 aa)). Positions 31-44 (KLLLLGAGESGKST) are G1 motif. Position 36–43 (36–43 (GAGESGKS)) interacts with GTP. Position 43 (S43) interacts with Mg(2+). Y142 is subject to Phosphotyrosine. GTP is bound by residues D146, 171–177 (LRSRVKT), G199, 265–268 (NKKD), and A322. The G2 motif stretch occupies residues 169 to 177 (DVLRSRVKT). T177 contributes to the Mg(2+) binding site. The segment at 192-201 (FRMFDVGGQR) is G3 motif. The tract at residues 261-268 (VLFLNKKD) is G4 motif. The tract at residues 320–325 (TCATDT) is G5 motif. The interaction with RHO stretch occupies residues 340 to 350 (IKENLKDCGLF).

In terms of assembly, heterotrimeric G proteins are composed of 3 subunits alpha, beta and gamma. The alpha chain contains the guanine nucleotide binding site. Interacts with RHO. Interacts with RGS9 and PDE6G. Interacts (when myristoylated) with UNC119; interaction is required for localization in sensory neurons. As to expression, rod.

Its subcellular location is the cell projection. The protein resides in the cilium. It localises to the photoreceptor outer segment. The protein localises to the membrane. It is found in the photoreceptor inner segment. In terms of biological role, functions as a signal transducer for the rod photoreceptor RHO. Required for normal RHO-mediated light perception by the retina. Guanine nucleotide-binding proteins (G proteins) function as transducers downstream of G protein-coupled receptors (GPCRs), such as the photoreceptor RHO. The alpha chain contains the guanine nucleotide binding site and alternates between an active, GTP-bound state and an inactive, GDP-bound state. Activated RHO promotes GDP release and GTP binding. Signaling is mediated via downstream effector proteins, such as cGMP-phosphodiesterase. This chain is Guanine nucleotide-binding protein G(t) subunit alpha-1 (GNAT1), found in Bos taurus (Bovine).